Here is a 444-residue protein sequence, read N- to C-terminus: MPFIVNTDAERAEMLREIGVENFEALIADIPEEVRLKKALDLLPAMGEPEVKSLLEKMASSNAATCDHVSFLGAGAYDHFIPAAVKTIASRSEFYTAYTPYQAEVSQGTLQAIYEYQSVMCRLYGMDVANASMYDGASALAEAALIALNVTGRNGIVVAGKLHPYTSQVLETYLEAAGDRPIVQNSIEDGIGSVAALETLVSSETAAVIVQQPNFYGCLEEVEAIGEIAKKHGALFIVSADPVSLGVLEAPGNYGADIAVGEGQSVGNAQSFGGPYLGILTVKQAHVRKIPGRLVGMTKDKDGNDGFILTLQTREQHIRREKATSNICSNQALCALQAVVHLSLLGKEGIQDVANRSMQKAHYLADRITELPGFSLKFSAPFFREFVVETPVPAATIIEKMLDKKVFAGVDLSAWGEDGLLIAVTEKRTKEELDSFVSELASLG.

The protein belongs to the GcvP family. N-terminal subunit subfamily. As to quaternary structure, the glycine cleavage system is composed of four proteins: P, T, L and H. In this organism, the P 'protein' is a heterodimer of two subunits.

The catalysed reaction is N(6)-[(R)-lipoyl]-L-lysyl-[glycine-cleavage complex H protein] + glycine + H(+) = N(6)-[(R)-S(8)-aminomethyldihydrolipoyl]-L-lysyl-[glycine-cleavage complex H protein] + CO2. The glycine cleavage system catalyzes the degradation of glycine. The P protein binds the alpha-amino group of glycine through its pyridoxal phosphate cofactor; CO(2) is released and the remaining methylamine moiety is then transferred to the lipoamide cofactor of the H protein. In Chlorobaculum parvum (strain DSM 263 / NCIMB 8327) (Chlorobium vibrioforme subsp. thiosulfatophilum), this protein is Probable glycine dehydrogenase (decarboxylating) subunit 1.